Here is a 323-residue protein sequence, read N- to C-terminus: SURF1-like protein (323 aa).

Positions 57 to 71 are enriched in basic and acidic residues; that stretch reads DAPKSRENREKDGGK. The tract at residues 57-76 is disordered; it reads DAPKSRENREKDGGKSKKSK. Transmembrane regions (helical) follow at residues 81–101 and 299–319; these read WSTGSVLMLTIPVFAFSLGIW and HLNYLTTWFTLTLVTMLMWIH.

It belongs to the SURF1 family.

It localises to the mitochondrion inner membrane. Functionally, probably involved in the biogenesis of the COX complex. The chain is SURF1-like protein (sft-1) from Caenorhabditis elegans.